We begin with the raw amino-acid sequence, 125 residues long: Mesotocin-neurophysin MT (125 aa).

A signal peptide spans 1–19 (MSYTALAVTFFGWLALSSA). C20 and C25 are joined by a disulfide. G28 bears the Glycine amide mark. Intrachain disulfides connect C42–C86, C45–C59, C53–C76, C60–C66, C93–C106, C100–C118, and C107–C112.

The protein belongs to the vasopressin/oxytocin family. Mesotocin is produced by magnocellular preoptic neurons in the hypothalamus in amphibians, reptiles and birds.

It localises to the secreted. Its function is as follows. Mesotocin is a diuretic hormone. In Bufo japonicus (Japanese common toad), this protein is Mesotocin-neurophysin MT.